Consider the following 663-residue polypeptide: NAD(P)H-quinone oxidoreductase subunit 5, chloroplastic (663 aa).

The next 16 helical transmembrane spans lie at 11 to 31 (WLIP…LISF), 41 to 61 (LYGL…MNLL), 89 to 109 (FFID…AVLV), 126 to 146 (FFAY…SPNL), 149 to 169 (IYIF…FWFT), 189 to 209 (FCLL…DFIT), 224 to 244 (HLYF…AKSA), 260 to 280 (TPIS…FLVA), 292 to 312 (IMNL…TIAL), 329 to 349 (LGYM…FHLV), 398 to 418 (FTFL…CFWS), 436 to 456 (IAWI…LLAF), 482 to 502 (LYML…GFIS), 528 to 548 (ILLN…AYSI), 607 to 627 (WLFD…GQSL), and 635 to 655 (VSSY…FLPL).

Belongs to the complex I subunit 5 family. NDH is composed of at least 16 different subunits, 5 of which are encoded in the nucleus.

The protein localises to the plastid. It is found in the chloroplast thylakoid membrane. The enzyme catalyses a plastoquinone + NADH + (n+1) H(+)(in) = a plastoquinol + NAD(+) + n H(+)(out). It carries out the reaction a plastoquinone + NADPH + (n+1) H(+)(in) = a plastoquinol + NADP(+) + n H(+)(out). Functionally, NDH shuttles electrons from NAD(P)H:plastoquinone, via FMN and iron-sulfur (Fe-S) centers, to quinones in the photosynthetic chain and possibly in a chloroplast respiratory chain. The immediate electron acceptor for the enzyme in this species is believed to be plastoquinone. Couples the redox reaction to proton translocation, and thus conserves the redox energy in a proton gradient. The protein is NAD(P)H-quinone oxidoreductase subunit 5, chloroplastic (ndhF) of Chara vulgaris (Common stonewort).